Here is a 631-residue protein sequence, read N- to C-terminus: Golgin subfamily A member 8A (631 aa).

The segment covering 1 to 20 has biased composition (basic and acidic residues); that stretch reads MLPVDGEERKSEGSDTEGDR. Disordered stretches follow at residues 1 to 103, 127 to 154, 426 to 447, and 488 to 520; these read MLPV…QEQA, KKQVEHQLEEEKKANNEKQKAERELEGQ, TSAEKEPEAAVPASGTGGESSG, and PGDSAKDASPGGGHHQAGPGQGGEEGEAAGAAG. Over residues 78-92 the composition is skewed to low complexity; it reads SLYLSPKSSSASSSL. The segment covering 93–103 has biased composition (polar residues); the sequence is HARQSPCQEQA. Residues 110 to 468 adopt a coiled-coil conformation; it reads SIKISRLNDT…REHVEKLELG (359 aa). The segment covering 128-152 has biased composition (basic and acidic residues); sequence KQVEHQLEEEKKANNEKQKAERELE. Over residues 497-510 the composition is skewed to gly residues; sequence PGGGHHQAGPGQGG. A golgi-targeting domain region spans residues 519–631; that stretch reads AGDGVAACGS…CWAWLPRRRR (113 aa).

This sequence belongs to the GOLGA8 family.

The protein resides in the golgi apparatus. The protein localises to the golgi stack membrane. In terms of biological role, may be involved in maintaining Golgi structure. The polypeptide is Golgin subfamily A member 8A (GOLGA8A) (Homo sapiens (Human)).